The chain runs to 193 residues: Endoribonuclease YbeY (193 aa).

Residues H109, H113, and H119 each coordinate Zn(2+). The interval 143-193 (GAALREGRREGRAGEAKDRWTRSPTSISTPSRSGSTARGSRAKTSRAGSRT) is disordered. The span at 147–163 (REGRREGRAGEAKDRWT) shows a compositional bias: basic and acidic residues. Positions 164-181 (RSPTSISTPSRSGSTARG) are enriched in low complexity.

It belongs to the endoribonuclease YbeY family. Zn(2+) serves as cofactor.

The protein localises to the cytoplasm. Functionally, single strand-specific metallo-endoribonuclease involved in late-stage 70S ribosome quality control and in maturation of the 3' terminus of the 16S rRNA. The polypeptide is Endoribonuclease YbeY (Anaeromyxobacter dehalogenans (strain 2CP-C)).